Reading from the N-terminus, the 317-residue chain is Small ribosomal subunit biogenesis GTPase RsgA (317 aa).

Residues 88-249 (DQYKSKLFAA…LIDSPGFQEF (162 aa)) form the CP-type G domain. GTP-binding positions include 136 to 139 (NKID) and 190 to 198 (GQSGMGKST). The Zn(2+) site is built by Cys-273, Cys-278, His-280, and Cys-286.

This sequence belongs to the TRAFAC class YlqF/YawG GTPase family. RsgA subfamily. In terms of assembly, monomer. Associates with 30S ribosomal subunit, binds 16S rRNA. The cofactor is Zn(2+).

The protein resides in the cytoplasm. Its function is as follows. One of several proteins that assist in the late maturation steps of the functional core of the 30S ribosomal subunit. Helps release RbfA from mature subunits. May play a role in the assembly of ribosomal proteins into the subunit. Circularly permuted GTPase that catalyzes slow GTP hydrolysis, GTPase activity is stimulated by the 30S ribosomal subunit. The protein is Small ribosomal subunit biogenesis GTPase RsgA of Paraburkholderia phymatum (strain DSM 17167 / CIP 108236 / LMG 21445 / STM815) (Burkholderia phymatum).